The sequence spans 393 residues: Elongation factor Tu (393 aa).

Residues Lys-10 to Val-203 form the tr-type G domain. The segment at Gly-19–Thr-26 is G1. Residue Gly-19–Thr-26 coordinates GTP. Residue Thr-26 coordinates Mg(2+). Residues Gly-60–Ser-64 form a G2 region. Positions Asp-81–Gly-84 are G3. Residues Asp-81–His-85 and Asn-136–Asp-139 each bind GTP. The segment at Asn-136 to Asp-139 is G4. A G5 region spans residues Ser-173–Leu-175.

The protein belongs to the TRAFAC class translation factor GTPase superfamily. Classic translation factor GTPase family. EF-Tu/EF-1A subfamily. Monomer.

The protein resides in the cytoplasm. The catalysed reaction is GTP + H2O = GDP + phosphate + H(+). Functionally, GTP hydrolase that promotes the GTP-dependent binding of aminoacyl-tRNA to the A-site of ribosomes during protein biosynthesis. The chain is Elongation factor Tu from Chlorobium limicola (strain DSM 245 / NBRC 103803 / 6330).